A 432-amino-acid polypeptide reads, in one-letter code: MSDTTDVPENQKSPKPSGKADKRKIEEKPENSSLKRKKFEDPNKKVDPLEELPMKVPFKIVDGVRHLAPYWACYRTRTKGRWIGRKMVEVFSGEFLSTNRNYAKIACKMGRIYVNGEQMTDVDYVMRNGDRVEHWAHRHEHPIRDLPIRVISETDDLFVVEKPPSLPVHTCGQYAIHTVLGQLRVNEGRTGLRVLHRLDRATSGVLLFAKNYETDLEFKTTLKQGEWSKEYICKVDGVFPDEEQVCEQPIGPLVISMGIQCVRPDGKDAKSRFRKLWSDGTQSVVQVHIETGRTHQIRVHSQFLGHPIAGDQIYNSAVWGPTKGKNADYQKSFDELCEDVRNTHKCENWHEKPNPEFEQRMEHLAADTTPITPEAPSLTLEQRPEFDEICQKCNVESKKVPENHFQLYLHCLKYETKKWSFKTEMPDWAVQK.

Over residues 1–14 (MSDTTDVPENQKSP) the composition is skewed to polar residues. A disordered region spans residues 1–42 (MSDTTDVPENQKSPKPSGKADKRKIEEKPENSSLKRKKFEDP). A compositionally biased stretch (basic and acidic residues) spans 18–30 (GKADKRKIEEKPE). Residues 85–148 (RKMVEVFSGE…HEHPIRDLPI (64 aa)) enclose the S4 RNA-binding domain. Residue aspartate 199 is part of the active site.

This sequence belongs to the pseudouridine synthase RluA family.

This is an uncharacterized protein from Caenorhabditis elegans.